We begin with the raw amino-acid sequence, 169 residues long: uncharacterized protein (169 aa).

This is an uncharacterized protein from Buchnera aphidicola subsp. Acyrthosiphon pisum (strain APS) (Acyrthosiphon pisum symbiotic bacterium).